The sequence spans 314 residues: N-acyl-aromatic-L-amino acid amidohydrolase (carboxylate-forming) B (314 aa).

Zn(2+) is bound by residues His19 and Glu22. Substrate is bound by residues Arg63 and 70–71; that span reads NR. His116 lines the Zn(2+) pocket. Substrate is bound by residues Glu178 and Tyr289.

This sequence belongs to the AspA/AstE family. Aspartoacylase subfamily. In terms of assembly, homotetramer. It depends on Zn(2+) as a cofactor.

It is found in the apical cell membrane. It localises to the cytoplasm. It catalyses the reaction an N-acyl-aromatic L-alpha-amino acid + H2O = an aromatic L-alpha-amino acid + a carboxylate. The enzyme catalyses an N-acetyl-L-cysteine-S-conjugate + H2O = an S-substituted L-cysteine + acetate. Plays an important role in deacetylating mercapturic acids in kidney proximal tubules. This is N-acyl-aromatic-L-amino acid amidohydrolase (carboxylate-forming) B (acy3.2) from Danio rerio (Zebrafish).